We begin with the raw amino-acid sequence, 94 residues long: Phosphoribosyl-ATP pyrophosphatase (94 aa).

This sequence belongs to the PRA-PH family.

It localises to the cytoplasm. It carries out the reaction 1-(5-phospho-beta-D-ribosyl)-ATP + H2O = 1-(5-phospho-beta-D-ribosyl)-5'-AMP + diphosphate + H(+). It participates in amino-acid biosynthesis; L-histidine biosynthesis; L-histidine from 5-phospho-alpha-D-ribose 1-diphosphate: step 2/9. This chain is Phosphoribosyl-ATP pyrophosphatase, found in Saccharolobus islandicus (strain M.16.27) (Sulfolobus islandicus).